The chain runs to 397 residues: Serpin B10 (397 aa).

The Nuclear localization signal motif lies at 74–77 (KKRK).

This sequence belongs to the serpin family. Ov-serpin subfamily. Expressed in many tissues, including brain, heart, kidney, liver, lung, prostate, skin, spleen and stomach.

The protein resides in the nucleus. The protein localises to the cytoplasm. Protease inhibitor that may play a role in the regulation of protease activities during hematopoiesis and apoptosis induced by TNF. May regulate protease activities in the cytoplasm and in the nucleus. Inhibits plasmin. This chain is Serpin B10 (Serpinb10), found in Rattus norvegicus (Rat).